The following is a 704-amino-acid chain: Elongation factor G (704 aa).

The region spanning 8–291 (DKVRNIGIMA…AVVEYLASPV (284 aa)) is the tr-type G domain. GTP contacts are provided by residues 17-24 (AHIDAGKT), 90-94 (DTPGH), and 144-147 (NKMD).

Belongs to the TRAFAC class translation factor GTPase superfamily. Classic translation factor GTPase family. EF-G/EF-2 subfamily.

The protein localises to the cytoplasm. In terms of biological role, catalyzes the GTP-dependent ribosomal translocation step during translation elongation. During this step, the ribosome changes from the pre-translocational (PRE) to the post-translocational (POST) state as the newly formed A-site-bound peptidyl-tRNA and P-site-bound deacylated tRNA move to the P and E sites, respectively. Catalyzes the coordinated movement of the two tRNA molecules, the mRNA and conformational changes in the ribosome. The sequence is that of Elongation factor G from Pelodictyon phaeoclathratiforme (strain DSM 5477 / BU-1).